Here is a 444-residue protein sequence, read N- to C-terminus: Tryptophan 5-hydroxylase 1 (444 aa).

The region spanning 19-94 (TLIFSLKNEV…TVLSVDSPDQ (76 aa)) is the ACT domain. Residue Ser-58 is modified to Phosphoserine; by PKA. Tyr-235, Arg-257, and Thr-265 together coordinate L-tryptophan. The Fe cation site is built by His-272, His-277, and Glu-317. Residues Ser-336 and Ile-366 each contribute to the L-tryptophan site.

Belongs to the biopterin-dependent aromatic amino acid hydroxylase family. As to quaternary structure, homotetramer. Interacts with DNAJC12. It depends on Fe(2+) as a cofactor. Ubiquitinated, leading to its degradation by the proteasome. Ubiquitinated is triggered by phosphorylation. Post-translationally, phosphorylated; triggering degradation by the proteasome.

The enzyme catalyses (6R)-L-erythro-5,6,7,8-tetrahydrobiopterin + L-tryptophan + O2 = 5-hydroxy-L-tryptophan + (4aS,6R)-4a-hydroxy-L-erythro-5,6,7,8-tetrahydrobiopterin. It functions in the pathway aromatic compound metabolism; serotonin biosynthesis; serotonin from L-tryptophan: step 1/2. Functionally, oxidizes L-tryptophan to 5-hydroxy-l-tryptophan in the rate-determining step of serotonin biosynthesis. This is Tryptophan 5-hydroxylase 1 (Tph1) from Rattus norvegicus (Rat).